The primary structure comprises 155 residues: Small ribosomal subunit protein uS7cz/uS7cy (155 aa).

Belongs to the universal ribosomal protein uS7 family. Part of the 30S ribosomal subunit.

The protein localises to the plastid. It localises to the chloroplast. One of the primary rRNA binding proteins, it binds directly to 16S rRNA where it nucleates assembly of the head domain of the 30S subunit. The protein is Small ribosomal subunit protein uS7cz/uS7cy (rps7-A) of Angiopteris evecta (Mule's foot fern).